Consider the following 222-residue polypeptide: DUF1769 family protein (222 aa).

The protein belongs to the UPF0590 family.

The protein resides in the cytoplasm. The protein localises to the nucleus. The protein is DUF1769 family protein of Schizosaccharomyces pombe (strain 972 / ATCC 24843) (Fission yeast).